The chain runs to 531 residues: Peptide chain release factor 3 (531 aa).

The tr-type G domain occupies 10–278; it reads ARRRTFAIIS…DFVEHAPGPL (269 aa). GTP contacts are provided by residues 19 to 26, 87 to 91, and 141 to 144; these read SHPDAGKT, DTPGH, and NKLD.

Belongs to the TRAFAC class translation factor GTPase superfamily. Classic translation factor GTPase family. PrfC subfamily.

The protein resides in the cytoplasm. Functionally, increases the formation of ribosomal termination complexes and stimulates activities of RF-1 and RF-2. It binds guanine nucleotides and has strong preference for UGA stop codons. It may interact directly with the ribosome. The stimulation of RF-1 and RF-2 is significantly reduced by GTP and GDP, but not by GMP. The protein is Peptide chain release factor 3 of Thioalkalivibrio sulfidiphilus (strain HL-EbGR7).